The following is a 210-amino-acid chain: 7-carboxy-7-deazaguanine synthase (210 aa).

Substrate contacts are provided by residues 12–14 (LQG) and arginine 27. Residues 18–210 (NAGRPAVFCR…MQTHKYLNIP (193 aa)) form the Radical SAM core domain. [4Fe-4S] cluster is bound by residues cysteine 31, cysteine 46, and cysteine 49. Position 48-50 (48-50 (FCD)) interacts with S-adenosyl-L-methionine. Threonine 51 is a Mg(2+) binding site. A substrate-binding site is contributed by threonine 90. Residues glycine 92, 133–135 (SPK), and 173–176 (QPMD) contribute to the S-adenosyl-L-methionine site. Residue proline 210 coordinates substrate.

This sequence belongs to the radical SAM superfamily. 7-carboxy-7-deazaguanine synthase family. Homodimer. The cofactor is [4Fe-4S] cluster. Requires S-adenosyl-L-methionine as cofactor. It depends on Mg(2+) as a cofactor.

The catalysed reaction is 6-carboxy-5,6,7,8-tetrahydropterin + H(+) = 7-carboxy-7-deazaguanine + NH4(+). The protein operates within purine metabolism; 7-cyano-7-deazaguanine biosynthesis. In terms of biological role, catalyzes the complex heterocyclic radical-mediated conversion of 6-carboxy-5,6,7,8-tetrahydropterin (CPH4) to 7-carboxy-7-deazaguanine (CDG), a step common to the biosynthetic pathways of all 7-deazapurine-containing compounds. The protein is 7-carboxy-7-deazaguanine synthase of Burkholderia multivorans (strain ATCC 17616 / 249).